The following is a 587-amino-acid chain: Membrane protein insertase YidC (587 aa).

The next 5 helical transmembrane spans lie at 5 to 25 (SVIG…FMKP), 365 to 385 (GLII…LSLA), 430 to 450 (LGGC…FYVF), 480 to 500 (LPLY…TVFF), and 516 to 536 (IMIW…PSGL).

It belongs to the OXA1/ALB3/YidC family. Type 1 subfamily. Interacts with the Sec translocase complex via SecD. Specifically interacts with transmembrane segments of nascent integral membrane proteins during membrane integration.

The protein resides in the cell inner membrane. Functionally, required for the insertion and/or proper folding and/or complex formation of integral membrane proteins into the membrane. Involved in integration of membrane proteins that insert both dependently and independently of the Sec translocase complex, as well as at least some lipoproteins. Aids folding of multispanning membrane proteins. The polypeptide is Membrane protein insertase YidC (Chlorobaculum parvum (strain DSM 263 / NCIMB 8327) (Chlorobium vibrioforme subsp. thiosulfatophilum)).